The primary structure comprises 574 residues: E3 ubiquitin-protein ligase NEURL1 (574 aa).

The segment covering 1-18 (MGNNFSSVSSLQRGNPSR) has biased composition (polar residues). A disordered region spans residues 1–53 (MGNNFSSVSSLQRGNPSRASRGHPQNLKDSIGGSFPVPSHRCHHKQKHCPPTL). Gly2 carries the N-myristoyl glycine lipid modification. NHR domains follow at residues 61–217 (TPLL…QLLD) and 292–447 (GDLR…RILG). An RING-type zinc finger spans residues 520-560 (ECTICYEHAVDTVIYTCGHMCLCYSCGLRLKKALHACCPIC).

Interacts with CPEB3 (via N-terminal domain); the interaction increases CPEB3 ubiquitination. Interacts with DLL1. In terms of processing, myristoylation is a determinant of membrane targeting. In terms of tissue distribution, expressed in CA1 pyramidal neurons (at protein level). Expressed throughout the adult forebrain, including the cerebral cortex, amygdala, striatum, and CA1 area of the hippocampus. Expressed in sensory neurons of the olfactory epithelium, the vomeronasal organ, mammary gland and skeletal muscle.

The protein resides in the cytoplasm. It localises to the perinuclear region. Its subcellular location is the cell membrane. It is found in the perikaryon. The protein localises to the cell projection. The protein resides in the dendrite. It localises to the postsynaptic density. The catalysed reaction is S-ubiquitinyl-[E2 ubiquitin-conjugating enzyme]-L-cysteine + [acceptor protein]-L-lysine = [E2 ubiquitin-conjugating enzyme]-L-cysteine + N(6)-ubiquitinyl-[acceptor protein]-L-lysine.. The protein operates within protein modification; protein ubiquitination. Its function is as follows. Plays a role in hippocampal-dependent synaptic plasticity, learning and memory. Involved in the formation of spines and functional synaptic contacts by modulating the translational activity of the cytoplasmic polyadenylation element-binding protein CPEB3. Promotes ubiquitination of CPEB3, and hence induces CPEB3-dependent mRNA translation activation of glutamate receptor GRIA1 and GRIA2. Can function as an E3 ubiquitin-protein ligase to activate monoubiquitination of JAG1 (in vitro), thereby regulating the Notch pathway. Acts as a tumor suppressor; inhibits malignant cell transformation of medulloblastoma (MB) cells by inhibiting the Notch signaling pathway. This Mus musculus (Mouse) protein is E3 ubiquitin-protein ligase NEURL1 (Neurl1).